The sequence spans 249 residues: MTRKLVLLRHGQSQWNLDNRFTGWVDVELTDQGRQEAVAAGKLMKDEGLQFDVAHTSVLKRAIHTLQGALKELDQDWLPVSKSWRLNERHYGGLQGLDKAETAAKHGEEQVKIWRRSYDIPPPAMDVNDPGHPCHDRRYATLDRNALPGTESLATTLVRVLPYWHDAIAPQLKAGQTVLVTAHGNSLRALYKYLNDVSNEQILELNIPTGIPLLFELDDNLQVRSFRYLGDPEAAKRAAEAVANQGKAK.

Substrate is bound by residues 9–16 (RHGQSQWN), 22–23 (TG), R61, 88–91 (ERHY), K99, 115–116 (RR), and 184–185 (GN). Catalysis depends on H10, which acts as the Tele-phosphohistidine intermediate. E88 serves as the catalytic Proton donor/acceptor.

Belongs to the phosphoglycerate mutase family. BPG-dependent PGAM subfamily. As to quaternary structure, homodimer.

It catalyses the reaction (2R)-2-phosphoglycerate = (2R)-3-phosphoglycerate. It participates in carbohydrate degradation; glycolysis; pyruvate from D-glyceraldehyde 3-phosphate: step 3/5. Catalyzes the interconversion of 2-phosphoglycerate and 3-phosphoglycerate. The chain is 2,3-bisphosphoglycerate-dependent phosphoglycerate mutase from Xanthomonas euvesicatoria pv. vesicatoria (strain 85-10) (Xanthomonas campestris pv. vesicatoria).